Here is a 326-residue protein sequence, read N- to C-terminus: tRNA-modifying protein YgfZ (326 aa).

Folate-binding residues include Trp27 and Trp189.

The protein belongs to the tRNA-modifying YgfZ family.

It is found in the cytoplasm. In terms of biological role, folate-binding protein involved in regulating the level of ATP-DnaA and in the modification of some tRNAs. It is probably a key factor in regulatory networks that act via tRNA modification, such as initiation of chromosomal replication. The polypeptide is tRNA-modifying protein YgfZ (Escherichia coli O6:H1 (strain CFT073 / ATCC 700928 / UPEC)).